Consider the following 786-residue polypeptide: Protein SEY1 (786 aa).

Topologically, residues 1-684 (MSDLKEAIQL…KRSIVNTTER (684 aa)) are cytoplasmic. The GB1/RHD3-type G domain maps to 35-262 (GVKYHVISVF…QDASFFKDEY (228 aa)). Residue 45-52 (GSQSSGKS) participates in GTP binding. The stretch at 355–375 (KKVYEERRDDLIKQLNTIIDE) forms a coiled coil. Residues 685–705 (IPLYMYALVVALGWGRIITIL) form a helical membrane-spanning segment. Residues 706-708 (RNP) lie on the Lumenal side of the membrane. Residues 709–729 (ATIILSIIVLAGAYFVHKLNL) traverse the membrane as a helical segment. At 730-786 (WGPLLQFANQATGQATAVLKQTVRSLVVDEEPKRKILVEPHESEGVDKEPSKNDQHL) the chain is on the cytoplasmic side. The tract at residues 765-786 (ILVEPHESEGVDKEPSKNDQHL) is disordered.

It belongs to the TRAFAC class dynamin-like GTPase superfamily. GB1/RHD3 GTPase family. RHD3 subfamily.

It is found in the endoplasmic reticulum membrane. In terms of biological role, cooperates with the reticulon proteins and tubule-shaping DP1 family proteins to generate and maintain the structure of the tubular endoplasmic reticulum network. Has GTPase activity, which is required for its function in ER organization. The polypeptide is Protein SEY1 (Kluyveromyces lactis (strain ATCC 8585 / CBS 2359 / DSM 70799 / NBRC 1267 / NRRL Y-1140 / WM37) (Yeast)).